Here is a 784-residue protein sequence, read N- to C-terminus: Transcription factor kayak (784 aa).

3 stretches are compositionally biased toward low complexity: residues 97–106 (QPTQSAYQQQ), 115–126 (NNNNNSNNNANM), and 198–227 (QQQQQSQQQQQSQQQQQSQQQQQSQQQQQQ). 4 disordered regions span residues 97–126 (QPTQSAYQQQNAKQSYGHNNNNNSNNNANM), 196–231 (YNQQQQQSQQQQQSQQQQQSQQQQQSQQQQQQHLPT), 358–404 (PGSD…GNGS), and 421–464 (SGRG…KRRI). Residues 365–378 (SNGSWNEGQLNDDQ) show a composition bias toward polar residues. Over residues 380 to 397 (TTDTSSAATDSTSYQNGG) the composition is skewed to low complexity. Over residues 421–438 (SGRGSGLAANSTTSNSAT) the composition is skewed to polar residues. One can recognise a bZIP domain in the interval 459–522 (EEKRRIRRER…SQLEYVLQTH (64 aa)). The interval 461–463 (KRR) is basic motif. Residues 464–471 (IRRERNKL) are leucine-zipper. Serine 594 is modified (phosphoserine). Disordered regions lie at residues 616 to 635 (QDGAIDSGSSLDQDGPTPAK) and 759 to 784 (PTCSSQNKHPLELPTPTSEPSKLVSL).

The protein belongs to the bZIP family. Fos subfamily. As to quaternary structure, homodimer. Heterodimer with Jra. The kay-Jra heterodimer binds more stably to the AP-1 site than either of the two proteins alone.

Its subcellular location is the nucleus. Its function is as follows. Developmentally regulated transcription factor AP-1 binds and recognizes the enhancer DNA sequence: 5'-TGA[CG]TCA-3'. May play a role in the function or determination of a particular subset of cells in the developing embryo. It is able to carry out its function either independently of or in conjunction with Jra. This is Transcription factor kayak from Drosophila mojavensis (Fruit fly).